Consider the following 769-residue polypeptide: Glutathione biosynthesis bifunctional protein GshAB (769 aa).

The interval 1–347 is glutamate--cysteine ligase; sequence MLDSFKEDPN…QLADENENNI (347 aa). Positions 514 to 768 constitute an ATP-grasp domain; that stretch reads KLVLAEHDIR…IGDKILDFLF (255 aa). 541 to 599 contacts ATP; the sequence is SLFEDKQIVVKPKSTNYGWGISIFKNKFTLEDYQEALNIAFSYDSSVIIEEFIPGDEFR. Mg(2+) is bound by residues aspartate 721, glutamate 738, and asparagine 740. 3 residues coordinate Mn(2+): aspartate 721, glutamate 738, and asparagine 740.

This sequence in the N-terminal section; belongs to the glutamate--cysteine ligase type 1 family. Type 2 subfamily. As to quaternary structure, monomer. The cofactor is Mg(2+). Requires Mn(2+) as cofactor.

The enzyme catalyses L-cysteine + L-glutamate + ATP = gamma-L-glutamyl-L-cysteine + ADP + phosphate + H(+). The catalysed reaction is gamma-L-glutamyl-L-cysteine + glycine + ATP = glutathione + ADP + phosphate + H(+). It functions in the pathway sulfur metabolism; glutathione biosynthesis; glutathione from L-cysteine and L-glutamate: step 1/2. It participates in sulfur metabolism; glutathione biosynthesis; glutathione from L-cysteine and L-glutamate: step 2/2. Functionally, synthesizes glutathione from L-glutamate and L-cysteine via gamma-L-glutamyl-L-cysteine. The polypeptide is Glutathione biosynthesis bifunctional protein GshAB (Listeria monocytogenes serovar 1/2a (strain ATCC BAA-679 / EGD-e)).